The following is a 274-amino-acid chain: Rhamnulose-1-phosphate aldolase (274 aa).

The active site involves E117. Positions 141, 143, and 212 each coordinate Zn(2+).

Belongs to the aldolase class II family. RhaD subfamily. In terms of assembly, homotetramer. Zn(2+) is required as a cofactor.

It localises to the cytoplasm. It carries out the reaction L-rhamnulose 1-phosphate = (S)-lactaldehyde + dihydroxyacetone phosphate. The protein operates within carbohydrate degradation; L-rhamnose degradation; glycerone phosphate from L-rhamnose: step 3/3. Its function is as follows. Catalyzes the reversible cleavage of L-rhamnulose-1-phosphate to dihydroxyacetone phosphate (DHAP) and L-lactaldehyde. The protein is Rhamnulose-1-phosphate aldolase of Escherichia coli (strain K12 / MC4100 / BW2952).